Reading from the N-terminus, the 383-residue chain is Succinyl-diaminopimelate desuccinylase (383 aa).

Residue histidine 79 coordinates Zn(2+). Aspartate 81 is an active-site residue. Residue aspartate 110 coordinates Zn(2+). Residue glutamate 141 is the Proton acceptor of the active site. Positions 142, 170, and 355 each coordinate Zn(2+).

It belongs to the peptidase M20A family. DapE subfamily. Homodimer. It depends on Zn(2+) as a cofactor. Co(2+) serves as cofactor.

It carries out the reaction N-succinyl-(2S,6S)-2,6-diaminopimelate + H2O = (2S,6S)-2,6-diaminopimelate + succinate. The protein operates within amino-acid biosynthesis; L-lysine biosynthesis via DAP pathway; LL-2,6-diaminopimelate from (S)-tetrahydrodipicolinate (succinylase route): step 3/3. In terms of biological role, catalyzes the hydrolysis of N-succinyl-L,L-diaminopimelic acid (SDAP), forming succinate and LL-2,6-diaminopimelate (DAP), an intermediate involved in the bacterial biosynthesis of lysine and meso-diaminopimelic acid, an essential component of bacterial cell walls. The sequence is that of Succinyl-diaminopimelate desuccinylase from Helicobacter pylori (strain HPAG1).